The sequence spans 505 residues: Cyclin-dependent kinase C-1 (505 aa).

Positions 26 to 325 (FEKLEQIGEG…AKDALDAEYF (300 aa)) constitute a Protein kinase domain. ATP contacts are provided by residues 32 to 40 (IGEGTYGQV) and K55. The residue at position 37 (Y37) is a Phosphotyrosine. The active-site Proton acceptor is the D164. T198 carries the post-translational modification Phosphothreonine. Residues 336-505 (SLPTYESSHE…QRNQQYGWQQ (170 aa)) form a disordered region. The span at 429-456 (PPSGNQSGGYNQSRGGYSSGSYPPQGRG) shows a compositional bias: low complexity. The segment covering 482–491 (GQYGGSGSSG) has biased composition (gly residues). Over residues 492 to 505 (RGQNQRNQQYGWQQ) the composition is skewed to low complexity.

This sequence belongs to the protein kinase superfamily. CMGC Ser/Thr protein kinase family. CDC2/CDKX subfamily. In terms of assembly, interacts with CYCT1-3. Highly expressed in flowers. Expressed in seedlings, roots, rosettes and stems.

It catalyses the reaction L-seryl-[protein] + ATP = O-phospho-L-seryl-[protein] + ADP + H(+). The enzyme catalyses L-threonyl-[protein] + ATP = O-phospho-L-threonyl-[protein] + ADP + H(+). It carries out the reaction [DNA-directed RNA polymerase] + ATP = phospho-[DNA-directed RNA polymerase] + ADP + H(+). This Arabidopsis thaliana (Mouse-ear cress) protein is Cyclin-dependent kinase C-1 (CDKC-1).